The following is a 352-amino-acid chain: DNA-directed RNA polymerase subunit alpha (352 aa).

The segment at 1–236 (MTVNIRNWQE…DQLQVFVHFE (236 aa)) is alpha N-terminal domain (alpha-NTD). The tract at residues 257-352 (SDVNQLNRFL…AKKLEQELLG (96 aa)) is alpha C-terminal domain (alpha-CTD).

Belongs to the RNA polymerase alpha chain family. Homodimer. The RNAP catalytic core consists of 2 alpha, 1 beta, 1 beta' and 1 omega subunit. When a sigma factor is associated with the core the holoenzyme is formed, which can initiate transcription.

It catalyses the reaction RNA(n) + a ribonucleoside 5'-triphosphate = RNA(n+1) + diphosphate. In terms of biological role, DNA-dependent RNA polymerase catalyzes the transcription of DNA into RNA using the four ribonucleoside triphosphates as substrates. The sequence is that of DNA-directed RNA polymerase subunit alpha from Sphingopyxis alaskensis (strain DSM 13593 / LMG 18877 / RB2256) (Sphingomonas alaskensis).